The chain runs to 325 residues: Malate dehydrogenase (325 aa).

11-17 is a binding site for NAD(+); sequence GAAGHVS. Substrate is bound by residues arginine 92 and arginine 98. NAD(+) contacts are provided by residues asparagine 105, glutamine 112, and 129–131; that span reads VGN. Residues asparagine 131 and arginine 162 each contribute to the substrate site. Residue histidine 187 is the Proton acceptor of the active site.

This sequence belongs to the LDH/MDH superfamily. MDH type 2 family.

The enzyme catalyses (S)-malate + NAD(+) = oxaloacetate + NADH + H(+). Functionally, catalyzes the reversible oxidation of malate to oxaloacetate. The protein is Malate dehydrogenase of Desulfotalea psychrophila (strain LSv54 / DSM 12343).